The chain runs to 467 residues: tRNA modification GTPase MnmE (467 aa).

3 residues coordinate (6S)-5-formyl-5,6,7,8-tetrahydrofolate: arginine 30, glutamate 92, and arginine 131. Residues 226–388 (GLKVAIIGRP…LEAAILNAVN (163 aa)) enclose the TrmE-type G domain. Asparagine 236 provides a ligand contact to K(+). GTP is bound by residues 236 to 241 (NVGKSS), 255 to 261 (TDLPGTT), and 280 to 283 (DTAG). Residue serine 240 coordinates Mg(2+). Positions 255, 257, and 260 each coordinate K(+). Mg(2+) is bound at residue threonine 261. Lysine 467 contributes to the (6S)-5-formyl-5,6,7,8-tetrahydrofolate binding site.

The protein belongs to the TRAFAC class TrmE-Era-EngA-EngB-Septin-like GTPase superfamily. TrmE GTPase family. As to quaternary structure, homodimer. Heterotetramer of two MnmE and two MnmG subunits. It depends on K(+) as a cofactor.

The protein localises to the cytoplasm. Functionally, exhibits a very high intrinsic GTPase hydrolysis rate. Involved in the addition of a carboxymethylaminomethyl (cmnm) group at the wobble position (U34) of certain tRNAs, forming tRNA-cmnm(5)s(2)U34. In Trichodesmium erythraeum (strain IMS101), this protein is tRNA modification GTPase MnmE.